The chain runs to 92 residues: UPF0250 protein VC0395_A0469/VC395_0960 (92 aa).

The protein belongs to the UPF0250 family.

The protein is UPF0250 protein VC0395_A0469/VC395_0960 of Vibrio cholerae serotype O1 (strain ATCC 39541 / Classical Ogawa 395 / O395).